We begin with the raw amino-acid sequence, 126 residues long: Large ribosomal subunit protein bL19 (126 aa).

This sequence belongs to the bacterial ribosomal protein bL19 family.

Its function is as follows. This protein is located at the 30S-50S ribosomal subunit interface and may play a role in the structure and function of the aminoacyl-tRNA binding site. The chain is Large ribosomal subunit protein bL19 from Albidiferax ferrireducens (strain ATCC BAA-621 / DSM 15236 / T118) (Rhodoferax ferrireducens).